A 103-amino-acid chain; its full sequence is Small ribosomal subunit protein uS10 (103 aa).

The protein belongs to the universal ribosomal protein uS10 family. In terms of assembly, part of the 30S ribosomal subunit.

Its function is as follows. Involved in the binding of tRNA to the ribosomes. The chain is Small ribosomal subunit protein uS10 from Chromobacterium violaceum (strain ATCC 12472 / DSM 30191 / JCM 1249 / CCUG 213 / NBRC 12614 / NCIMB 9131 / NCTC 9757 / MK).